We begin with the raw amino-acid sequence, 69 residues long: Consomatin Be1 (69 aa).

An N-terminal signal peptide occupies residues 1–22; sequence MEMAYWVMVMMMVWITAPLSEG. The propeptide occupies 23-57; that stretch reads GKLNDVIRALAPDDVTPQFILRSLISRRRSDSDVR. Glutamate 58 carries the 4-carboxyglutamate modification. Cysteine 62 and cysteine 67 are disulfide-bonded. At tryptophan 64 the chain carries D-tryptophan. 4-hydroxyproline is present on residues proline 68 and proline 69.

The protein belongs to the conotoxin C superfamily. Consomatin family. Expressed by the venom duct.

The protein resides in the secreted. Its function is as follows. Moderately activates human somatostatin receptors (SSTR) with a preferential activation of SSTR1 and SSTR4. In vivo, does not cause behavioral changes in mice within a few minutes of intracranial injection, but causes a progressive loss of movement thereafter. Four to five hours after injection, mice recover, even with the highest dose tested. Shows antinociception and antihyperalgesia activities in two mouse models of acute pain, most probably by acting outside the central nervous system. The chain is Consomatin Be1 from Conus betulinus (Beech cone).